Reading from the N-terminus, the 400-residue chain is ATP-dependent rRNA helicase RRP3 (400 aa).

Positions 1–29 (MEFGDLRIDESLIKTCQEKGITRPTEVQR) match the Q motif motif. Positions 32–202 (IPAVLGGGDV…SSILKRPKTI (171 aa)) constitute a Helicase ATP-binding domain. 45 to 52 (SQTGSGKT) contacts ATP. Positions 150–153 (DEAD) match the DEAD box motif. Residues 229–373 (ALVELLEMSQ…EFKMMKKNFG (145 aa)) enclose the Helicase C-terminal domain.

The protein belongs to the DEAD box helicase family. DDX47/RRP3 subfamily. Interacts with the SSU processome.

The protein resides in the nucleus. The catalysed reaction is ATP + H2O = ADP + phosphate + H(+). Functionally, ATP-dependent rRNA helicase required for pre-ribosomal RNA processing. Involved in the maturation of the 35S-pre-rRNA and to its cleavage to mature 18S rRNA. The protein is ATP-dependent rRNA helicase RRP3 of Encephalitozoon cuniculi (strain GB-M1) (Microsporidian parasite).